Reading from the N-terminus, the 203-residue chain is Probable flagellin 1 (203 aa).

The propeptide occupies Met1 to Gly6.

The protein belongs to the archaeal flagellin family.

The protein resides in the archaeal flagellum. Flagellin is the subunit protein which polymerizes to form the filaments of archaeal flagella. The chain is Probable flagellin 1 (flaB1) from Aeropyrum pernix (strain ATCC 700893 / DSM 11879 / JCM 9820 / NBRC 100138 / K1).